The primary structure comprises 537 residues: Serendipity locus protein alpha (537 aa).

Its subcellular location is the cytoplasm. It localises to the cell membrane. Required for the cellularization of the syncytial blastoderm embryo. Involved in the localization of the actin filaments just prior to and during plasma membrane invagination. Sry-alpha together with nullo and bnk may provide auxiliary functions, by acting both to stabilize a large and dynamic microfilament structure and regulate its functions. In Drosophila virilis (Fruit fly), this protein is Serendipity locus protein alpha (Sry-alpha).